We begin with the raw amino-acid sequence, 407 residues long: Multifunctional CCA protein (407 aa).

The ATP site is built by G8 and R11. The CTP site is built by G8 and R11. The Mg(2+) site is built by D21 and D23. The ATP site is built by R91, R137, and R140. R91, R137, and R140 together coordinate CTP. The region spanning 228-329 (TGIHTLMVAQ…IKIFDKMDVW (102 aa)) is the HD domain.

The protein belongs to the tRNA nucleotidyltransferase/poly(A) polymerase family. Bacterial CCA-adding enzyme type 1 subfamily. As to quaternary structure, monomer. Can also form homodimers and oligomers. Requires Mg(2+) as cofactor. It depends on Ni(2+) as a cofactor.

The enzyme catalyses a tRNA precursor + 2 CTP + ATP = a tRNA with a 3' CCA end + 3 diphosphate. It catalyses the reaction a tRNA with a 3' CCA end + 2 CTP + ATP = a tRNA with a 3' CCACCA end + 3 diphosphate. Its function is as follows. Catalyzes the addition and repair of the essential 3'-terminal CCA sequence in tRNAs without using a nucleic acid template. Adds these three nucleotides in the order of C, C, and A to the tRNA nucleotide-73, using CTP and ATP as substrates and producing inorganic pyrophosphate. tRNA 3'-terminal CCA addition is required both for tRNA processing and repair. Also involved in tRNA surveillance by mediating tandem CCA addition to generate a CCACCA at the 3' terminus of unstable tRNAs. While stable tRNAs receive only 3'-terminal CCA, unstable tRNAs are marked with CCACCA and rapidly degraded. This Aliivibrio fischeri (strain ATCC 700601 / ES114) (Vibrio fischeri) protein is Multifunctional CCA protein.